Consider the following 663-residue polypeptide: MVKERCPKQAFQDSLEDIKERMKEKRIKKLAKVATVNKTLCTKVQILNSGSTAIKNYKANNTALALALEAEKLKTRQAQDLILGLKREHQRLIFEIFMLRRRLQSQQGRDTAESKLASLKDIIAKVTHNLLETASLLEPAHLLCSSANNNTPNPSKVEEKLSSGASAILRLPSHAPISDTLPKNVIPNRLEPEQRNFKDKVVLEANRNTAGVNRQSRGRRSHSNQPSFTSRLEECNNEDKTESGATMNKNVSLRRRASSLNICLEESLPLEDTNVNSEHTVVETERPFPTEEFSNESRTDREIDNVDNPASPLKVKCFPHANGSKMTGLASEAKQTSNKNKEEPRVGRERVKKGKAERVAVSQMKKPWENSKPRARSKSRDRSASKKSVAKEKMNSSLNSGDAFDFACEESIHVTPFRQNKQEESQNESSLEISSSEGELDDSLYKPYKDKSKNKNLKPDIAPVPLRSRSKRNTARKNSIAENELMSDVQAEANEKKITRNGLKRKSENSFTESAETYREKSFMPTCINTNNAIAENPEVKVFSDECNGGIIYTADEPSGASTPRISLSDVTNLPGNTDAKKHINLLFNEDEMKRSSTPSRKRRCKVSINYAEPKLSGKLRRGDPFTDSEFLQSPIFKNESKRNSLNRQSLSRYNEVFVGCRR.

2 coiled-coil regions span residues 8 to 29 (KQAF…RIKK) and 110 to 132 (DTAE…NLLE). Disordered regions lie at residues 207-250 (RNTA…MNKN), 278-401 (EHTV…LNSG), and 417-478 (FRQN…ARKN). 4 stretches are compositionally biased toward basic and acidic residues: residues 231 to 242 (RLEECNNEDKTE), 280 to 304 (TVVE…REID), 339 to 358 (KNKE…KAER), and 366 to 394 (KPWE…KEKM). Residues 427 to 437 (NESSLEISSSE) are compositionally biased toward low complexity. The span at 443 to 453 (SLYKPYKDKSK) shows a compositional bias: basic and acidic residues.

The protein belongs to the shugoshin family. Binds microtubules. Ubiquitinated by the anaphase promoting complex (APC) at the onset of anaphase, conducting to its degradation.

It is found in the nucleus. The protein localises to the chromosome. It localises to the centromere. Its subcellular location is the kinetochore. The protein resides in the nucleus speckle. Plays a central role in chromosome cohesion during mitosis by preventing premature dissociation of cohesin complex from centromeres after prophase, when most of cohesin complex dissociates from chromosomes arms. May act by preventing phosphorylation of the stag2 subunit of cohesin complex at the centromere, ensuring cohesin persistence at centromere until cohesin cleavage by espl1/separase at anaphase. May regulate kinetochore microtubule stability in mitosis, possibly to sense tension on mitotic chromosomes. This is Shugoshin 1 from Xenopus laevis (African clawed frog).